The chain runs to 267 residues: Large ribosomal subunit protein uL4 (267 aa).

This sequence belongs to the universal ribosomal protein uL4 family. In terms of assembly, part of the 50S ribosomal subunit.

Functionally, one of the primary rRNA binding proteins, this protein initially binds near the 5'-end of the 23S rRNA. It is important during the early stages of 50S assembly. It makes multiple contacts with different domains of the 23S rRNA in the assembled 50S subunit and ribosome. In terms of biological role, forms part of the polypeptide exit tunnel. The sequence is that of Large ribosomal subunit protein uL4 from Saccharolobus islandicus (strain Y.N.15.51 / Yellowstone #2) (Sulfolobus islandicus).